The primary structure comprises 689 residues: MFGSGNVLPVKIQPPLLRPLAYRVLSRKYGLSIKSDGLSALAEFVGTNIGANWRQGPATIKFLEQFAAVWKQQERGLFIDQSGVKEVIQEMKEREKVEWSHEHPIQHEENILGRTDDDENNSDDEMPIAADSSLQNVSLSSPMRQPTERDEYKQPFKPESSKALDWRDYFKVINASQQQRFSYNPHKMQFIFVPNKKQNGLGGIAGFLPDIEDKVQMFLTRYYLTNDRVMRNENFQNSDMFNPLSSMVSLQNELSNTNRQQQSSSMSITPIKNLLGRDAQNFLLLGLLNKNFKGNWSLEDPSGSVEIDISQTIPTQGHYYVPGCMVLVEGIYYSVGNKFHVTSMTLPPGERREITLETIGNLDLLGIHGISNNNFIARLDKDLKIRLHLLEKELTDHKFVILGANLFLDDLKIMTALSKILQKLNDDPPTLLIWQGSFTSVPVFASMSSRNISSSTQFKNNFDALATLLSRFDNLTENTTMIFIPGPNDLWGSMVSLGASGTLPQDPIPSAFTKKINKVCKNVVWSSNPTRIAYLSQEIVIFRDDLSGRFKRHRLEFPFNESEDVYTENDNMMSKDTDIVPIDELVKEPDQLPQKVQETRKLVKTILDQGHLSPFLDSLRPISWDLDHTLTLCPIPSTMVLCDTTSAQFDLTYNGCKVINPGSFIHNRRARYMEYVPSSKKTIQEEIYI.

Over residues 98 to 115 (EWSHEHPIQHEENILGRT) the composition is skewed to basic and acidic residues. The disordered stretch occupies residues 98–155 (EWSHEHPIQHEENILGRTDDDENNSDDEMPIAADSSLQNVSLSSPMRQPTERDEYKQP). Positions 116-126 (DDDENNSDDEM) are enriched in acidic residues. Ser122 is subject to Phosphoserine. A compositionally biased stretch (polar residues) spans 132-144 (SSLQNVSLSSPMR). Position 141 is a phosphoserine; by CDC28 (Ser141). Basic and acidic residues predominate over residues 146–155 (PTERDEYKQP). The residue at position 613 (Ser613) is a Phosphoserine.

The protein belongs to the DNA polymerase epsilon subunit B family. DNA polymerase epsilon is a heterotetramer consisting of POL2, DPB2, DPB3 and DPB4. In terms of processing, phosphorylated in a cell cycle dependent manner during late G1 phase. Phosphorylation may facilitate the interaction with POL2 or the activity of DNA polymerase II. Phosphorylation is independent of DNA replication but dependent upon CDC28 in vivo. Both Ser-141 and Ser-613 are phosphorylated in vivo, but in vitro only Ser-141 is phosphorylated by CDC28.

It localises to the cytoplasm. The protein resides in the nucleus. As accessory component of the DNA polymerase epsilon complex participates in chromosomal DNA replication. It is required during synthesis of the leading and lagging DNA strands at the replication fork and binds at/or near replication origins and moves along DNA with the replication fork. It has 3'-5' proofreading exonuclease activity that correct errors arising during DNA replication. It is also involved in DNA synthesis during DNA repair. The polypeptide is DNA polymerase epsilon subunit B (DPB2) (Saccharomyces cerevisiae (strain ATCC 204508 / S288c) (Baker's yeast)).